The chain runs to 235 residues: Lipoprotein-releasing system ATP-binding protein LolD (235 aa).

The ABC transporter domain occupies 5–235 (FALANIYKSF…SIDESGFNKI (231 aa)). Residue 40-47 (GKSGSGKS) coordinates ATP.

Belongs to the ABC transporter superfamily. Lipoprotein translocase (TC 3.A.1.125) family. The complex is composed of two ATP-binding proteins (LolD) and two transmembrane proteins (LolC and LolE).

Its subcellular location is the cell inner membrane. Its function is as follows. Part of the ABC transporter complex LolCDE involved in the translocation of mature outer membrane-directed lipoproteins, from the inner membrane to the periplasmic chaperone, LolA. Responsible for the formation of the LolA-lipoprotein complex in an ATP-dependent manner. This is Lipoprotein-releasing system ATP-binding protein LolD from Ehrlichia chaffeensis (strain ATCC CRL-10679 / Arkansas).